The sequence spans 365 residues: Transcription factor MYB93 (365 aa).

2 consecutive HTH myb-type domains span residues 9–61 and 62–116; these read ENGL…TNYL and RPDI…KKKL. DNA-binding regions (H-T-H motif) lie at residues 37-61 and 89-112; these read WRAL…TNYL and WSAI…NTHL.

As to quaternary structure, interacts with FBX5.

The protein resides in the nucleus. The protein localises to the cytoplasm. Its function is as follows. Transcription factor that acts as a negative regulator of lateral root (LR) development. Required for normal auxin responses during LR development. May be part of a negative feedback loop stimulated specifically in the endodermis upon LR initiation to ensure that LRs are formed only in the correct place. In Arabidopsis thaliana (Mouse-ear cress), this protein is Transcription factor MYB93.